A 45-amino-acid polypeptide reads, in one-letter code: Small polypeptide DEVIL 2 (45 aa).

The segment at 14 to 45 (SQSRRLGKYLKEQKGRIYIIRRCVMMLLCSHD) is required for DVL/RTFL small polypeptide activity. Residues 17 to 33 (RRLGKYLKEQKGRIYII) traverse the membrane as a helical segment.

It belongs to the DVL/RTFL small polypeptides family. As to expression, mostly expressed in stems and, to a lower extent, in roots and leaves.

Its subcellular location is the cell membrane. In terms of biological role, small polypeptide acting as a regulatory molecule which coordinates cellular responses required for differentiation, growth and development, including leaves shape, pedicule elongation, inflorescence organization and fruit maturation, probably by restricting polar cell proliferation in lateral organs and coordinating socket cell recruitment and differentiation at trichome sites. The chain is Small polypeptide DEVIL 2 from Arabidopsis thaliana (Mouse-ear cress).